Here is a 78-residue protein sequence, read N- to C-terminus: Putative membrane protein insertion efficiency factor (78 aa).

It belongs to the UPF0161 family.

The protein resides in the cell membrane. Its function is as follows. Could be involved in insertion of integral membrane proteins into the membrane. The polypeptide is Putative membrane protein insertion efficiency factor (Limosilactobacillus reuteri (strain DSM 20016) (Lactobacillus reuteri)).